A 124-amino-acid polypeptide reads, in one-letter code: UPF0102 protein Haur_0145 (124 aa).

Belongs to the UPF0102 family.

This is UPF0102 protein Haur_0145 from Herpetosiphon aurantiacus (strain ATCC 23779 / DSM 785 / 114-95).